We begin with the raw amino-acid sequence, 243 residues long: Proteasome subunit beta (243 aa).

A compositionally biased stretch (polar residues) spans 1–16; it reads MRAPQHNSDFSRTVNQ. The segment at 1-29 is disordered; sequence MRAPQHNSDFSRTVNQLADDPNPYEPEVG. A propeptide spans 1–48 (removed in mature form; by autocatalysis); the sequence is MRAPQHNSDFSRTVNQLADDPNPYEPEVGSMPKNEFSRADLDNVNKTG. Catalysis depends on Thr49, which acts as the Nucleophile.

The protein belongs to the peptidase T1B family. As to quaternary structure, the 20S proteasome core is composed of 14 alpha and 14 beta subunits that assemble into four stacked heptameric rings, resulting in a barrel-shaped structure. The two inner rings, each composed of seven catalytic beta subunits, are sandwiched by two outer rings, each composed of seven alpha subunits. The catalytic chamber with the active sites is on the inside of the barrel. Has a gated structure, the ends of the cylinder being occluded by the N-termini of the alpha-subunits. Is capped at one or both ends by the proteasome regulatory ATPase, PAN.

The protein localises to the cytoplasm. The catalysed reaction is Cleavage of peptide bonds with very broad specificity.. Its activity is regulated as follows. The formation of the proteasomal ATPase PAN-20S proteasome complex, via the docking of the C-termini of PAN into the intersubunit pockets in the alpha-rings, triggers opening of the gate for substrate entry. Interconversion between the open-gate and close-gate conformations leads to a dynamic regulation of the 20S proteasome proteolysis activity. Functionally, component of the proteasome core, a large protease complex with broad specificity involved in protein degradation. In Natrialba magadii (strain ATCC 43099 / DSM 3394 / CCM 3739 / CIP 104546 / IAM 13178 / JCM 8861 / NBRC 102185 / NCIMB 2190 / MS3) (Natronobacterium magadii), this protein is Proteasome subunit beta.